We begin with the raw amino-acid sequence, 123 residues long: Ribosome-binding factor A (123 aa).

Belongs to the RbfA family. Monomer. Binds 30S ribosomal subunits, but not 50S ribosomal subunits or 70S ribosomes.

It localises to the cytoplasm. Its function is as follows. One of several proteins that assist in the late maturation steps of the functional core of the 30S ribosomal subunit. Associates with free 30S ribosomal subunits (but not with 30S subunits that are part of 70S ribosomes or polysomes). Required for efficient processing of 16S rRNA. May interact with the 5'-terminal helix region of 16S rRNA. The polypeptide is Ribosome-binding factor A (Dechloromonas aromatica (strain RCB)).